The following is a 507-amino-acid chain: ATP synthase subunit alpha, chloroplastic (507 aa).

Position 170–177 (170–177 (IGDRQTGK)) interacts with ATP.

The protein belongs to the ATPase alpha/beta chains family. As to quaternary structure, F-type ATPases have 2 components, CF(1) - the catalytic core - and CF(0) - the membrane proton channel. CF(1) has five subunits: alpha(3), beta(3), gamma(1), delta(1), epsilon(1). CF(0) has four main subunits: a, b, b' and c.

It is found in the plastid. Its subcellular location is the chloroplast thylakoid membrane. The enzyme catalyses ATP + H2O + 4 H(+)(in) = ADP + phosphate + 5 H(+)(out). Its function is as follows. Produces ATP from ADP in the presence of a proton gradient across the membrane. The alpha chain is a regulatory subunit. This Adiantum capillus-veneris (Maidenhair fern) protein is ATP synthase subunit alpha, chloroplastic.